The sequence spans 149 residues: Large-conductance mechanosensitive channel (149 aa).

3 helical membrane-spanning segments follow: residues 10–30 (FALKGNVMDLAVGVIIGGAFA), 41–61 (IMPIVAFIVGGEINFKNMFLI), and 87–107 (GSFITVLINFLILAFIIFMMV).

This sequence belongs to the MscL family. In terms of assembly, homopentamer.

It is found in the cell inner membrane. In terms of biological role, channel that opens in response to stretch forces in the membrane lipid bilayer. May participate in the regulation of osmotic pressure changes within the cell. The chain is Large-conductance mechanosensitive channel from Psychrobacter cryohalolentis (strain ATCC BAA-1226 / DSM 17306 / VKM B-2378 / K5).